The primary structure comprises 119 residues: Large ribosomal subunit protein bL20 (119 aa).

Belongs to the bacterial ribosomal protein bL20 family.

Functionally, binds directly to 23S ribosomal RNA and is necessary for the in vitro assembly process of the 50S ribosomal subunit. It is not involved in the protein synthesizing functions of that subunit. The chain is Large ribosomal subunit protein bL20 from Treponema denticola (strain ATCC 35405 / DSM 14222 / CIP 103919 / JCM 8153 / KCTC 15104).